The primary structure comprises 252 residues: Triosephosphate isomerase (252 aa).

9–11 (NWK) serves as a coordination point for substrate. His95 functions as the Electrophile in the catalytic mechanism. Catalysis depends on Glu167, which acts as the Proton acceptor. Substrate is bound by residues Gly173, Ser213, and 234-235 (GG).

This sequence belongs to the triosephosphate isomerase family. In terms of assembly, homodimer.

It is found in the cytoplasm. It catalyses the reaction D-glyceraldehyde 3-phosphate = dihydroxyacetone phosphate. It functions in the pathway carbohydrate biosynthesis; gluconeogenesis. Its pathway is carbohydrate degradation; glycolysis; D-glyceraldehyde 3-phosphate from glycerone phosphate: step 1/1. Involved in the gluconeogenesis. Catalyzes stereospecifically the conversion of dihydroxyacetone phosphate (DHAP) to D-glyceraldehyde-3-phosphate (G3P). The protein is Triosephosphate isomerase of Syntrophotalea carbinolica (strain DSM 2380 / NBRC 103641 / GraBd1) (Pelobacter carbinolicus).